A 111-amino-acid polypeptide reads, in one-letter code: Cytochrome c2 (111 aa).

Heme c is bound by residues C14, C17, H18, and M83.

It belongs to the cytochrome c family. In terms of processing, binds 1 heme c group covalently per subunit.

In terms of biological role, cytochrome c2 is found mainly in purple, non-sulfur, photosynthetic bacteria where it functions as the electron donor to the oxidized bacteriochlorophyll in the photophosphorylation pathway. However, it may also have a role in the respiratory chain and is found in some non-photosynthetic bacteria. This is Cytochrome c2 from Agrobacterium tumefaciens (strain II Chrys).